We begin with the raw amino-acid sequence, 211 residues long: Metalloproteinase inhibitor 3 (211 aa).

Positions 1-23 (MTPWLGLIVLLGSWSLGDWGAEA) are cleaved as a signal peptide. Residue Cys24 participates in Zn(2+) binding. Involved in metalloproteinase-binding regions lie at residues 24–27 (CTCS) and 88–89 (ES). Disulfide bonds link Cys24/Cys91, Cys26/Cys118, Cys36/Cys143, Cys145/Cys192, Cys150/Cys155, and Cys163/Cys184. In terms of domain architecture, NTR spans 24-143 (CTCSPSHPQD…GLNYRYHLGC (120 aa)). Residues 105 to 188 (TGRVYDGKMY…SKHYACIRQK (84 aa)) form a mediates interaction with EFEMP1 region. N-linked (GlcNAc...) asparagine glycosylation is present at Asn207.

It belongs to the protease inhibitor I35 (TIMP) family. In terms of assembly, interacts with EFEMP1. Interacts with KDR.

The protein localises to the secreted. The protein resides in the extracellular space. It localises to the extracellular matrix. Functionally, mediates a variety of processes including matrix regulation and turnover, inflammation, and angiogenesis, through reversible inhibition of zinc protease superfamily enzymes, primarily matrix metalloproteinases (MMPs). Regulates extracellular matrix (ECM) remodeling through inhibition of matrix metalloproteinases (MMP) including MMP-1, MMP-2, MMP-3, MMP-7, MMP-9, MMP-13, MMP-14 and MMP-15. Additionally, modulates the processing of amyloid precursor protein (APP) and apolipoprotein E receptor ApoER2 by inhibiting two alpha-secretases ADAM10 and ADAM17. Functions as a tumor suppressor and a potent inhibitor of angiogenesis. Exerts its anti-angiogenic effect by directly interacting with vascular endothelial growth factor (VEGF) receptor-2/KDR, preventing its binding to the VEGFA ligand. Selectively induces apoptosis in angiogenic endothelial cells through a caspase-independent cell death pathway. Mechanistically, inhibits matrix-induced focal adhesion kinase PTK2 tyrosine phosphorylation and association with paxillin/PXN and disrupts the incorporation of ITGB3, PTK2 and PXN into focal adhesion contacts on the matrix. The chain is Metalloproteinase inhibitor 3 (TIMP3) from Macaca mulatta (Rhesus macaque).